The sequence spans 113 residues: U11-theraphotoxin-Hhn1d (113 aa).

The N-terminal stretch at 1-21 (MNTVRVTFLLVFVVAVSLGQA) is a signal peptide. The propeptide occupies 22–74 (DKDENRMEMKDKTEQGKSYLHFAENLLLQKLEDVEAKLLEKDSEKSINSRQKR). 3 disulfide bridges follow: cysteine 75–cysteine 90, cysteine 82–cysteine 95, and cysteine 89–cysteine 110.

It belongs to the neurotoxin 14 (magi-1) family. 01 (HNTX-16) subfamily. As to expression, expressed by the venom gland.

Its subcellular location is the secreted. Probable ion channel inhibitor. This Cyriopagopus hainanus (Chinese bird spider) protein is U11-theraphotoxin-Hhn1d.